Here is a 1059-residue protein sequence, read N- to C-terminus: Isoleucine--tRNA ligase (1059 aa).

The 'HIGH' region signature appears at 47 to 57 (PYTTGHIHLGT). The 'KMSKS' region motif lies at 591–595 (KMSKS). ATP is bound at residue Lys594.

It belongs to the class-I aminoacyl-tRNA synthetase family. IleS type 2 subfamily. In terms of assembly, monomer. Zn(2+) serves as cofactor.

The protein resides in the cytoplasm. It carries out the reaction tRNA(Ile) + L-isoleucine + ATP = L-isoleucyl-tRNA(Ile) + AMP + diphosphate. Catalyzes the attachment of isoleucine to tRNA(Ile). As IleRS can inadvertently accommodate and process structurally similar amino acids such as valine, to avoid such errors it has two additional distinct tRNA(Ile)-dependent editing activities. One activity is designated as 'pretransfer' editing and involves the hydrolysis of activated Val-AMP. The other activity is designated 'posttransfer' editing and involves deacylation of mischarged Val-tRNA(Ile). This Methanoculleus marisnigri (strain ATCC 35101 / DSM 1498 / JR1) protein is Isoleucine--tRNA ligase.